Here is a 233-residue protein sequence, read N- to C-terminus: DREGAGKHIQAGAKKVLITAPGKGDIPTYVVGVNAELYSHEDTIISNASCTTNCLAPFVKVLDQKFGIIKGTMTTTHSYTGDQRLLDASHRDLRRARAAALNIVPTSTGAAKAVALVLPNLKGKLNGIALRVPTPNVSVVDLVVQVSKKTFAEEVNAAFRDAAEKELKGILDVCDEPLVSVDFRCSDVSSTIDSSLTMVMGDDMVKVIAWYDNEWGYSQRVVDLADIVANNWK.

D-glyceraldehyde 3-phosphate is bound by residues 49–51 (SCT), threonine 80, arginine 95, 108–109 (TG), and arginine 131. Cysteine 50 (nucleophile) is an active-site residue. Asparagine 213 provides a ligand contact to NADP(+).

Belongs to the glyceraldehyde-3-phosphate dehydrogenase family. Tetramer of either four A chains (GAPDH 2) or two A and two B chains (GAPDH 1).

Its subcellular location is the plastid. It localises to the chloroplast. The enzyme catalyses D-glyceraldehyde 3-phosphate + phosphate + NADP(+) = (2R)-3-phospho-glyceroyl phosphate + NADPH + H(+). Its pathway is carbohydrate biosynthesis; Calvin cycle. The polypeptide is Glyceraldehyde-3-phosphate dehydrogenase A, chloroplastic (GAPA) (Sinapis alba (White mustard)).